Here is a 305-residue protein sequence, read N- to C-terminus: Ribonucleoside-diphosphate reductase small subunit (305 aa).

Fe cation contacts are provided by Glu64, Glu94, and His97. Tyr101 is an active-site residue. Residues 150–170 form a helical membrane-spanning segment; the sequence is VLVFLLIEGIFFISSFYSIAT. The Fe cation site is built by Glu157, Glu191, and His194.

This sequence belongs to the ribonucleoside diphosphate reductase small chain family. As to quaternary structure, heterotetramer composed of a homodimer of the large subunit (R1) and a homodimer of the small subunit (R2). Larger multisubunit protein complex are also active, composed of (R1)n(R2)n. Requires Fe cation as cofactor.

The protein resides in the host membrane. The enzyme catalyses a 2'-deoxyribonucleoside 5'-diphosphate + [thioredoxin]-disulfide + H2O = a ribonucleoside 5'-diphosphate + [thioredoxin]-dithiol. Its function is as follows. Ribonucleoside-diphosphate reductase holoenzyme provides the precursors necessary for viral DNA synthesis. Allows virus growth in non-dividing cells, as well as reactivation from latency in infected hosts. Catalyzes the biosynthesis of deoxyribonucleotides from the corresponding ribonucleotides. The polypeptide is Ribonucleoside-diphosphate reductase small subunit (Equus caballus (Horse)).